Consider the following 525-residue polypeptide: GMP synthase [glutamine-hydrolyzing] (525 aa).

The 190-residue stretch at 13–202 (TILVLDFGSQ…AVEICQAAQT (190 aa)) folds into the Glutamine amidotransferase type-1 domain. Cysteine 89 (nucleophile) is an active-site residue. Catalysis depends on residues histidine 176 and glutamate 178. One can recognise a GMPS ATP-PPase domain in the interval 203-400 (WTMENFIDTE…LGISHELVWR (198 aa)). An ATP-binding site is contributed by 231 to 237 (SGGVDST). Arginine 304, aspartate 462, lysine 517, and glutamate 523 together coordinate XMP.

As to quaternary structure, homodimer. Mg(2+) is required as a cofactor.

The protein localises to the cytoplasm. It localises to the cytosol. The enzyme catalyses XMP + L-glutamine + ATP + H2O = GMP + L-glutamate + AMP + diphosphate + 2 H(+). It participates in purine metabolism; GMP biosynthesis; GMP from XMP (L-Gln route): step 1/1. Functionally, catalyzes the conversion of xanthine monophosphate (XMP) to GMP in the presence of glutamine and ATP through an adenyl-XMP intermediate. The chain is GMP synthase [glutamine-hydrolyzing] (GUA1) from Eremothecium gossypii (strain ATCC 10895 / CBS 109.51 / FGSC 9923 / NRRL Y-1056) (Yeast).